Consider the following 153-residue polypeptide: Ubiquitin-conjugating enzyme E2 35 (153 aa).

Residues 5 to 151 form the UBC core domain; the sequence is NLPRRIIKET…AKEWTRLYAS (147 aa). C89 serves as the catalytic Glycyl thioester intermediate.

It belongs to the ubiquitin-conjugating enzyme family. Interacts with yeast and human Mms2, with the RING domain of RGLG2 and with UEV1A, UEV1B, UEV1C and UEV1D. In terms of tissue distribution, ubiquitously expressed at low level. Mainly expressed in the vasculature.

The catalysed reaction is S-ubiquitinyl-[E1 ubiquitin-activating enzyme]-L-cysteine + [E2 ubiquitin-conjugating enzyme]-L-cysteine = [E1 ubiquitin-activating enzyme]-L-cysteine + S-ubiquitinyl-[E2 ubiquitin-conjugating enzyme]-L-cysteine.. The protein operates within protein modification; protein ubiquitination. Its function is as follows. Catalyzes the synthesis of non-canonical poly-ubiquitin chains that are linked through 'Lys-63'. This type of poly-ubiquitination does not lead to protein degradation by the proteasome. Mediates transcriptional activation of target genes. Required for postreplication repair of UV-damaged DNA and for adapting root developmental programs to suboptimal availability of iron. The sequence is that of Ubiquitin-conjugating enzyme E2 35 (UBC35) from Arabidopsis thaliana (Mouse-ear cress).